The chain runs to 256 residues: Phosphatidylglycerol--prolipoprotein diacylglyceryl transferase (256 aa).

The next 3 helical transmembrane spans lie at 19-39, 56-76, and 91-111; these read VHWYGLMYLIGFVGAWLLGYW, LIFYSALGVILGGRVGYMLFY, and IWEGGMSFHGGLLGVVIAAWL. A 1,2-diacyl-sn-glycero-3-phospho-(1'-sn-glycerol) is bound at residue Arg139. A helical transmembrane segment spans residues 231-251; that stretch reads FGWLTMGQVLSIPMLLIGIWL.

This sequence belongs to the Lgt family.

The protein localises to the cell inner membrane. It catalyses the reaction L-cysteinyl-[prolipoprotein] + a 1,2-diacyl-sn-glycero-3-phospho-(1'-sn-glycerol) = an S-1,2-diacyl-sn-glyceryl-L-cysteinyl-[prolipoprotein] + sn-glycerol 1-phosphate + H(+). Its pathway is protein modification; lipoprotein biosynthesis (diacylglyceryl transfer). In terms of biological role, catalyzes the transfer of the diacylglyceryl group from phosphatidylglycerol to the sulfhydryl group of the N-terminal cysteine of a prolipoprotein, the first step in the formation of mature lipoproteins. The sequence is that of Phosphatidylglycerol--prolipoprotein diacylglyceryl transferase from Legionella pneumophila subsp. pneumophila (strain Philadelphia 1 / ATCC 33152 / DSM 7513).